A 336-amino-acid polypeptide reads, in one-letter code: Aspartate--ammonia ligase (336 aa).

Belongs to the class-II aminoacyl-tRNA synthetase family. AsnA subfamily.

Its subcellular location is the cytoplasm. It carries out the reaction L-aspartate + NH4(+) + ATP = L-asparagine + AMP + diphosphate + H(+). It functions in the pathway amino-acid biosynthesis; L-asparagine biosynthesis; L-asparagine from L-aspartate (ammonia route): step 1/1. This Lactobacillus acidophilus (strain ATCC 700396 / NCK56 / N2 / NCFM) protein is Aspartate--ammonia ligase.